Here is an 83-residue protein sequence, read N- to C-terminus: Hainantoxin-III 9 (83 aa).

A signal peptide spans 1 to 21 (MKASMFLALAGLALLFVVCYA). The propeptide occupies 22-48 (SESEEKEFPIELLSKIFAVDVFKGEER). Disulfide bonds link C50/C65, C57/C70, and C64/C77. L81 carries the leucine amide modification.

This sequence belongs to the neurotoxin 10 (Hwtx-1) family. 15 (Hntx-3) subfamily. As to quaternary structure, monomer. In terms of tissue distribution, expressed by the venom gland.

The protein localises to the secreted. Its function is as follows. Selective antagonist of neuronal tetrodotoxin (TTX)-sensitive voltage-gated sodium channels (IC(50)=1270 nM on Nav1.1/SCN1A, 270 nM on Nav1.2/SCN2A, 491 nM on Nav1.3/SCN3A and 232 nM on Nav1.7/SCN9A). This toxin suppress Nav1.7 current amplitude without significantly altering the activation, inactivation, and repriming kinetics. Short extreme depolarizations partially activate the toxin-bound channel, indicating voltage-dependent inhibition of this toxin. This toxin increases the deactivation of the Nav1.7 current after extreme depolarizations. The toxin-Nav1.7 complex is gradually dissociated upon prolonged strong depolarizations in a voltage-dependent manner, and the unbound toxin rebinds to Nav1.7 after a long repolarization. Moreover, analysis of chimeric channels showed that the DIIS3-S4 linker is critical for toxin binding to Nav1.7. These data are consistent with this toxin interacting with Nav1.7 site 4 and trapping the domain II voltage sensor in the closed state. This Cyriopagopus hainanus (Chinese bird spider) protein is Hainantoxin-III 9.